Here is a 205-residue protein sequence, read N- to C-terminus: MTEFESAPAYQEAKYLTSAAEFDQLPPDQGAEIAFIGRSNAGKSSALNIITGIKGLARTSKTPGRTQMINFFALNEHERLVDLPGYGYAKVPRMVQKRWEELVDSYLKKRRCLKGLVVVMDIRHPLKEVDEDVIEWAVNYDIPIHILLTKSDKLSQNAAKKTLGEVQTAISAYGEKLTLQLFSSHDRTGLDEVKAVLSQWFSSEP.

An EngB-type G domain is found at 29–203 (QGAEIAFIGR…KAVLSQWFSS (175 aa)). Residues 37 to 44 (GRSNAGKS), 64 to 68 (GRTQM), 82 to 85 (DLPG), 149 to 152 (TKSD), and 182 to 184 (FSS) contribute to the GTP site. Positions 44 and 66 each coordinate Mg(2+).

It belongs to the TRAFAC class TrmE-Era-EngA-EngB-Septin-like GTPase superfamily. EngB GTPase family. Requires Mg(2+) as cofactor.

In terms of biological role, necessary for normal cell division and for the maintenance of normal septation. This is Probable GTP-binding protein EngB from Coxiella burnetii (strain CbuK_Q154) (Coxiella burnetii (strain Q154)).